Here is a 93-residue protein sequence, read N- to C-terminus: uncharacterized protein (93 aa).

This sequence to E.coli YdbD C-terminal region.

This is an uncharacterized protein from Escherichia coli (strain K12).